The sequence spans 60 residues: Photosystem II reaction center protein L (60 aa).

A helical transmembrane segment spans residues 39–59; sequence SLYWGLLLIFVLAVLFSSYIF.

This sequence belongs to the PsbL family. PSII is composed of 1 copy each of membrane proteins PsbA, PsbB, PsbC, PsbD, PsbE, PsbF, PsbH, PsbI, PsbJ, PsbK, PsbL, PsbM, PsbT, PsbX, PsbY, PsbZ, Psb30/Ycf12, at least 3 peripheral proteins of the oxygen-evolving complex and a large number of cofactors. It forms dimeric complexes.

The protein localises to the plastid. It is found in the chloroplast thylakoid membrane. In terms of biological role, one of the components of the core complex of photosystem II (PSII). PSII is a light-driven water:plastoquinone oxidoreductase that uses light energy to abstract electrons from H(2)O, generating O(2) and a proton gradient subsequently used for ATP formation. It consists of a core antenna complex that captures photons, and an electron transfer chain that converts photonic excitation into a charge separation. This subunit is found at the monomer-monomer interface and is required for correct PSII assembly and/or dimerization. This chain is Photosystem II reaction center protein L, found in Oedogonium cardiacum (Filamentous green alga).